The chain runs to 83 residues: Mu-conotoxin-like PnMKLT1-014 (83 aa).

The N-terminal stretch at 1–22 is a signal peptide; that stretch reads MNLTCMMIVAVLFLTAWTFVMA. Positions 23–50 are excised as a propeptide; the sequence is DDSNNGLANLFSKSRYEMEDPEPSKLEK. Disulfide bonds link cysteine 54–cysteine 72, cysteine 61–cysteine 77, and cysteine 71–cysteine 82.

Belongs to the conotoxin O1 superfamily. In terms of tissue distribution, expressed by the venom duct.

It localises to the secreted. Mu-conotoxins block voltage-gated sodium channels (Nav). The chain is Mu-conotoxin-like PnMKLT1-014 from Conus pennaceus (Feathered cone).